We begin with the raw amino-acid sequence, 119 residues long: NADH-quinone oxidoreductase subunit A (119 aa).

Helical transmembrane passes span 9 to 29, 63 to 83, and 88 to 108; these read VLLF…LGYV, LVAI…PWAV, and VGMA…VGFA.

The protein belongs to the complex I subunit 3 family. NDH-1 is composed of 14 different subunits. Subunits NuoA, H, J, K, L, M, N constitute the membrane sector of the complex.

The protein localises to the cell inner membrane. The enzyme catalyses a quinone + NADH + 5 H(+)(in) = a quinol + NAD(+) + 4 H(+)(out). Its function is as follows. NDH-1 shuttles electrons from NADH, via FMN and iron-sulfur (Fe-S) centers, to quinones in the respiratory chain. The immediate electron acceptor for the enzyme in this species is believed to be ubiquinone. Couples the redox reaction to proton translocation (for every two electrons transferred, four hydrogen ions are translocated across the cytoplasmic membrane), and thus conserves the redox energy in a proton gradient. The protein is NADH-quinone oxidoreductase subunit A of Verminephrobacter eiseniae (strain EF01-2).